Here is a 254-residue protein sequence, read N- to C-terminus: Decaprenylphosphoryl-2-keto-beta-D-erythro-pentose reductase (254 aa).

Residue aspartate 67 participates in NAD(+) binding. Tyrosine 160 serves as the catalytic Proton acceptor. Lysine 164 lines the NAD(+) pocket.

The protein belongs to the short-chain dehydrogenases/reductases (SDR) family. As to quaternary structure, interacts with DprE1 to form an epimerase complex.

The protein localises to the periplasm. It carries out the reaction trans,octa-cis-decaprenylphospho-beta-D-arabinofuranose + NAD(+) = trans,octa-cis-decaprenylphospho-beta-D-erythro-pentofuranosid-2-ulose + NADH + H(+). Its pathway is cell wall biogenesis; cell wall polysaccharide biosynthesis. In terms of biological role, component of the DprE1-DprE2 complex that catalyzes the 2-step epimerization of decaprenyl-phospho-ribose (DPR) to decaprenyl-phospho-arabinose (DPA), a key precursor that serves as the arabinose donor required for the synthesis of cell-wall arabinans. DprE1 catalyzes the first step of epimerization, namely FAD-dependent oxidation of the C2' hydroxyl of DPR to yield the keto intermediate decaprenyl-phospho-2'-keto-D-arabinose (DPX). The intermediate DPX is then transferred to DprE2 subunit of the epimerase complex, most probably through a 'substrate channel' at the interface of DprE1-DprE2 complex. DprE2 then catalyzes the second step of epimerization, the NAD(+)-dependent reduction of DPX that leads to the formation of DPA. This is Decaprenylphosphoryl-2-keto-beta-D-erythro-pentose reductase from Mycolicibacterium smegmatis (strain ATCC 700084 / mc(2)155) (Mycobacterium smegmatis).